The primary structure comprises 106 residues: Thiosulfate sulfurtransferase GlpE (106 aa).

The region spanning 17–105 is the Rhodanese domain; that stretch reads EQKQAHLVDI…WHRANLPIEA (89 aa). Residue C65 is the Cysteine persulfide intermediate of the active site.

The protein belongs to the GlpE family.

Its subcellular location is the cytoplasm. It catalyses the reaction thiosulfate + hydrogen cyanide = thiocyanate + sulfite + 2 H(+). The catalysed reaction is thiosulfate + [thioredoxin]-dithiol = [thioredoxin]-disulfide + hydrogen sulfide + sulfite + 2 H(+). Transferase that catalyzes the transfer of sulfur from thiosulfate to thiophilic acceptors such as cyanide or dithiols. May function in a CysM-independent thiosulfate assimilation pathway by catalyzing the conversion of thiosulfate to sulfite, which can then be used for L-cysteine biosynthesis. The protein is Thiosulfate sulfurtransferase GlpE of Vibrio cholerae serotype O1 (strain ATCC 39541 / Classical Ogawa 395 / O395).